The following is a 260-amino-acid chain: Transcription factor BEE 1 (260 aa).

Residues 118–139 (ETGSLRRGKRLKKKKEEEDEKE) are disordered. Residues 151-201 (QATDSHSLAERVRRGKINERLRCLQDMVPGCYKAMGMATMLDEIINYVQSL) form the bHLH domain.

It is found in the nucleus. Its function is as follows. Positive regulator of brassinosteroid signaling. This chain is Transcription factor BEE 1 (BEE1), found in Arabidopsis thaliana (Mouse-ear cress).